The primary structure comprises 138 residues: Cellular retinoic acid-binding protein 2 (138 aa).

The Nuclear localization signal motif lies at 21–31 (KVLGVNVMLRK). Residue Lys-102 forms a Glycyl lysine isopeptide (Lys-Gly) (interchain with G-Cter in SUMO) linkage. 133–135 (RVY) lines the all-trans-retinoate pocket.

It belongs to the calycin superfamily. Fatty-acid binding protein (FABP) family. As to quaternary structure, interacts with RXR and RARA. Interacts with importin alpha. Post-translationally, sumoylated in response to retinoic acid binding, sumoylation is critical for dissociation from ER and subsequent nuclear translocation.

It localises to the cytoplasm. It is found in the endoplasmic reticulum. Its subcellular location is the nucleus. Its function is as follows. Transports retinoic acid to the nucleus. Regulates the access of retinoic acid to the nuclear retinoic acid receptors. This Homo sapiens (Human) protein is Cellular retinoic acid-binding protein 2 (CRABP2).